A 465-amino-acid chain; its full sequence is 6-phospho-beta-glucosidase GmuD (465 aa).

Catalysis depends on Glu170, which acts as the Proton donor. Glu368 serves as the catalytic Nucleophile.

It belongs to the glycosyl hydrolase 1 family.

It carries out the reaction 6-phospho-beta-D-glucosyl-(1-&gt;4)-D-glucose + H2O = D-glucose 6-phosphate + D-glucose. Its function is as follows. Phospho-beta-D-glucosidase that seems to be involved in the degradation of glucomannan. Is also capable of hydrolyzing aryl-phospho-beta-D-glucosides, although very weakly, and plays only a minor role, if any, in the degradation of these substrates in vivo. This chain is 6-phospho-beta-glucosidase GmuD (gmuD), found in Bacillus subtilis (strain 168).